The chain runs to 119 residues: MTGAVAPPAVLVAAGGALGAVLRWRVVAATPTTEYPAGTLVVNVVGSFVLAALTFAAADADTMLLFGTGACGAFTTFASFSVDVVALVDADRPVAAAGHALGNLLGAGLAVALAWLLVA.

A run of 4 helical transmembrane segments spans residues 2 to 22 (TGAVAPPAVLVAAGGALGAVL), 37 to 57 (AGTLVVNVVGSFVLAALTFAA), 62 to 82 (TMLLFGTGACGAFTTFASFSV), and 99 to 119 (HALGNLLGAGLAVALAWLLVA). Residues Gly-72 and Thr-75 each contribute to the Na(+) site.

It belongs to the fluoride channel Fluc/FEX (TC 1.A.43) family.

It localises to the cell membrane. The enzyme catalyses fluoride(in) = fluoride(out). Na(+) is not transported, but it plays an essential structural role and its presence is essential for fluoride channel function. Functionally, fluoride-specific ion channel. Important for reducing fluoride concentration in the cell, thus reducing its toxicity. This chain is Fluoride-specific ion channel FluC 1, found in Halobacterium salinarum (strain ATCC 700922 / JCM 11081 / NRC-1) (Halobacterium halobium).